The following is a 167-amino-acid chain: Endoribonuclease YbeY (167 aa).

Positions 131, 135, and 141 each coordinate Zn(2+).

It belongs to the endoribonuclease YbeY family. Zn(2+) serves as cofactor.

The protein localises to the cytoplasm. Single strand-specific metallo-endoribonuclease involved in late-stage 70S ribosome quality control and in maturation of the 3' terminus of the 16S rRNA. The protein is Endoribonuclease YbeY of Rickettsia akari (strain Hartford).